The following is a 570-amino-acid chain: Pentatricopeptide repeat-containing protein At1g31430 (570 aa).

13 PPR repeats span residues 10-44 (SLLMYNKMLKSLADGKSFTKVLALFGELRGQGLYP), 45-79 (DNFTLPVVLKSIGRLRKVIEGEKVHGYAVKAGLEF), 80-110 (DSYVSNSLMGMYASLGKIEITHKVFDEMPQR), 111-141 (DVVSWNGLISSYVGNGRFEDAIGVFKRMSQE), 147-177 (DEGTIVSTLSACSALKNLEIGERIYRFVVTE), 181-215 (SVRIGNALVDMFCKCGCLDKARAVFDSMRDKNVKC), 216-242 (WTSMVFGYVSTGRIDEARVLFERSPVK), 243-277 (DVVLWTAMMNGYVQFNRFDEALELFRCMQTAGIRP), 278-312 (DNFVLVSLLTGCAQTGALEQGKWIHGYINENRVTV), 313-343 (DKVVGTALVDMYAKCGCIETALEVFYEIKER), 344-378 (DTASWTSLIYGLAMNGMSGRALDLYYEMENVGVRL), 379-414 (DAITFVAVLTACNHGGFVAEGRKIFHSMTERHNVQP), and 415-449 (KSEHCSCLIDLLCRAGLLDEAEELIDKMRGESDET). The tract at residues 453-528 (VYCSLLSAAR…FPGCSSIEID (76 aa)) is type E motif. Residues 529 to 561 (GVGHEFIVGDDLLSHPKMDEINSMLHQTTNLML) are type E(+) motif.

This sequence belongs to the PPR family. PCMP-E subfamily.

This Arabidopsis thaliana (Mouse-ear cress) protein is Pentatricopeptide repeat-containing protein At1g31430 (PCMP-E55).